We begin with the raw amino-acid sequence, 393 residues long: Branched-chain-amino-acid aminotransferase, mitochondrial (393 aa).

The transit peptide at 1-16 (MLQRHSLKLGKFSIRT) directs the protein to the mitochondrion. Lysine 219 carries the N6-(pyridoxal phosphate)lysine modification. Position 315 is a phosphothreonine (threonine 315).

The protein belongs to the class-IV pyridoxal-phosphate-dependent aminotransferase family. It depends on pyridoxal 5'-phosphate as a cofactor.

It is found in the mitochondrion matrix. The catalysed reaction is L-leucine + 2-oxoglutarate = 4-methyl-2-oxopentanoate + L-glutamate. It catalyses the reaction L-isoleucine + 2-oxoglutarate = (S)-3-methyl-2-oxopentanoate + L-glutamate. The enzyme catalyses L-valine + 2-oxoglutarate = 3-methyl-2-oxobutanoate + L-glutamate. It carries out the reaction a 2-oxocarboxylate + L-methionine = 4-methylsulfanyl-2-oxobutanoate + an L-alpha-amino acid. It functions in the pathway amino-acid biosynthesis; L-isoleucine biosynthesis; L-isoleucine from 2-oxobutanoate: step 4/4. Its pathway is amino-acid biosynthesis; L-leucine biosynthesis; L-leucine from 3-methyl-2-oxobutanoate: step 4/4. It participates in amino-acid biosynthesis; L-valine biosynthesis; L-valine from pyruvate: step 4/4. The protein operates within amino-acid biosynthesis; L-methionine biosynthesis via salvage pathway; L-methionine from S-methyl-5-thio-alpha-D-ribose 1-phosphate: step 6/6. Functionally, mitochondrial isozyme of branched-chain-amino-acid aminotransferase, involved in the biosynthesis of the branched chain amino acids (BCAAs) leucine, isoleucine, and valine. Catalyzes the formation of methionine from 2-keto-4-methylthiobutyrate (KMTB) in the methionine salvage pathway primarily using BCAAs (leucine, isoleucine, and valine) as the amino donors. Appears to be involved in the regulation of the cell cycle, although this may be indirect via metabolic changes. Connects BCAAs and TCA-cycle metabolism governing TCA-cycle flux to activate TORC1 signaling. High copy suppressor of a temperature-sensitive mutation in the ABC transporter, ATM1. The sequence is that of Branched-chain-amino-acid aminotransferase, mitochondrial from Saccharomyces cerevisiae (strain ATCC 204508 / S288c) (Baker's yeast).